Here is a 395-residue protein sequence, read N- to C-terminus: Biotin biosynthesis cytochrome P450 (395 aa).

Position 60 (Arg-60) interacts with substrate. 89–93 (HRRLR) contributes to the heme binding site. A substrate-binding site is contributed by 169–173 (IDFTR). Cys-250 and Cys-275 form a disulfide bridge. 285 to 287 (TAR) lines the heme pocket. Tyr-307 is a binding site for substrate. Residues 343-345 (HVC) and Cys-345 each bind heme.

It depends on heme as a cofactor.

It carries out the reaction a C2-C8-saturated long-chain fatty acyl-[ACP] + 2 reduced [flavodoxin] + 3 O2 = 6-carboxyhexanoyl-[ACP] + a fatty aldehyde + 2 oxidized [flavodoxin] + 3 H2O + 3 H(+). The protein operates within cofactor biosynthesis; biotin biosynthesis. Functionally, catalyzes the C-C bond cleavage of fatty acid linked to acyl carrier protein (ACP) to generate pimelic acid for biotin biosynthesis. It has high affinity for long-chain fatty acids with the greatest affinity for myristic acid. The chain is Biotin biosynthesis cytochrome P450 (bioI) from Bacillus subtilis (strain 168).